Reading from the N-terminus, the 1530-residue chain is Brefeldin A resistance protein (1530 aa).

Residues 1–26 (MNQNSDTTHGQALGSTLNHTTEVTRI) are compositionally biased toward polar residues. A disordered region spans residues 1-100 (MNQNSDTTHG…SDDSSVDRLA (100 aa)). Residue Asn28 is glycosylated (N-linked (GlcNAc...) asparagine). Residues 36-48 (SSSNVDESLDSSN) show a composition bias toward low complexity. Over residues 54 to 64 (KASHTNEEYRS) the composition is skewed to basic and acidic residues. Asn67 carries an N-linked (GlcNAc...) asparagine glycan. Positions 72-93 (PSSSNEPSPESSSNSDSSSSDD) are enriched in low complexity. The 258-residue stretch at 153 to 410 (KTFPDIFLQP…FLDMGFDCHP (258 aa)) folds into the ABC transporter 1 domain. N-linked (GlcNAc...) asparagine glycans are attached at residues Asn273, Asn334, and Asn450. Phosphoserine is present on residues Ser486 and Ser489. Thr491 is subject to Phosphothreonine. The next 6 membrane-spanning stretches (helical) occupy residues 539-559 (AYIGSMAFAFLFQSLIIGSIF), 575-595 (VLFFSILFCALQSLSEIANMF), 620-640 (LIVDLPFRFINISVFSIVLYF), 649-669 (GGFWTYFLFLFIGATCMSAFF), 684-704 (ALGGIGVLAIAIYTGYAIPNI), and 791-811 (LAIIIGYYAFLVFVNIVASET). A disordered region spans residues 843-864 (PLDLETGQDTQGGDVVKESPDN). Positions 882–1125 (FSWRNLNYDI…LLNYFESHGA (244 aa)) constitute an ABC transporter 2 domain. 918-925 (GESGAGKT) contributes to the ATP binding site. N-linked (GlcNAc...) asparagine glycosylation is found at Asn1159 and Asn1175. Position 1186 is a phosphothreonine (Thr1186). The next 6 membrane-spanning stretches (helical) occupy residues 1220–1240 (ILMSKLALDIFAGLFIGFTFY), 1255–1275 (AVFMATVLAVPLINGLQPKFI), 1300–1320 (AIIVEIPFNLVFGTLFFLCWF), 1338–1358 (YAWLLYMFFQMYFSTFGQAVA), 1367–1387 (ASVVNSLLFTFVITFNGVLQP), and 1392–1412 (VGFWHWMHSLTPFTYLIEGLL). 2 N-linked (GlcNAc...) asparagine glycosylation sites follow: Asn1449 and Asn1460. A helical transmembrane segment spans residues 1492–1512 (GIFVGYVFFNIFAVLLLFYVF).

Belongs to the ABC transporter superfamily. ABCG family. PDR (TC 3.A.1.205) subfamily.

It is found in the membrane. Its function is as follows. Confers hyper-resistance to brefeldin A (BFA), an inhibitor of intracellular protein transport. Could serve as an efflux pump of various antibiotics. The chain is Brefeldin A resistance protein (bfr1) from Schizosaccharomyces pombe (strain 972 / ATCC 24843) (Fission yeast).